Here is a 114-residue protein sequence, read N- to C-terminus: uncharacterized protein (114 aa).

3 consecutive transmembrane segments (helical) span residues 38-60, 64-86, and 91-113; these read PLWFLTVTGILEIAGALAMTAGI, YAAIGAGVLFVVLMAGAIHAHMF, and SVIMAIQAMICLIVSIMIIMGSY.

The protein localises to the cell membrane. This is an uncharacterized protein from Bacillus subtilis (strain 168).